Here is a 479-residue protein sequence, read N- to C-terminus: Fibrinogen beta chain (479 aa).

Residues 1–18 (MRHLWLLLLSVSLVQTQA) form the signal peptide. The tract at residues 20 to 82 (TTDSDKVDLS…VERKPPDAGG (63 aa)) is disordered. The beta-chain polymerization, binding distal domain of another fibrin stretch occupies residues 33 to 35 (GHR). 2 stretches are compositionally biased toward basic and acidic residues: residues 35–45 (RPVDRRKEEPP) and 64–78 (AKVD…RKPP). 2 cysteine pairs are disulfide-bonded: C219–C304 and C229–C258. The 257-residue stretch at 220 to 476 (NIPVVSGKEC…RMSMKIRPVF (257 aa)) folds into the Fibrinogen C-terminal domain. The N-linked (GlcNAc...) asparagine glycan is linked to N382. A disulfide bridge links C412 with C425.

As to quaternary structure, heterohexamer; disulfide linked. Contains 2 sets of 3 non-identical chains (alpha, beta and gamma). The 2 heterotrimers are in head to head conformation with the N-termini in a small central domain. In terms of processing, conversion of fibrinogen to fibrin is triggered by thrombin, which cleaves fibrinopeptides A and B from alpha and beta chains, and thus exposes the N-terminal polymerization sites responsible for the formation of the soft clot.

The protein resides in the secreted. Functionally, cleaved by the protease thrombin to yield monomers which, together with fibrinogen alpha (FGA) and fibrinogen gamma (FGG), polymerize to form an insoluble fibrin matrix. Fibrin has a major function in hemostasis as one of the primary components of blood clots. In addition, functions during the early stages of wound repair to stabilize the lesion and guide cell migration during re-epithelialization. Was originally thought to be essential for platelet aggregation, based on in vitro studies using anticoagulated blood. However subsequent studies have shown that it is not absolutely required for thrombus formation in vivo. Enhances expression of SELP in activated platelets. Maternal fibrinogen is essential for successful pregnancy. Fibrin deposition is also associated with infection, where it protects against IFNG-mediated hemorrhage. May also facilitate the antibacterial immune response via both innate and T-cell mediated pathways. The chain is Fibrinogen beta chain (Fgb) from Rattus norvegicus (Rat).